The chain runs to 293 residues: Small ribosomal subunit protein uS5 (293 aa).

The disordered stretch occupies residues 1 to 56 (MADDAGAAGGPGGPGGPGMGGRGGFRGGFGSGVRGRGRGRGRGRGRGRGARGGKAE). Ala2 carries the N-acetylalanine modification. Gly residues predominate over residues 7–34 (AAGGPGGPGGPGMGGRGGFRGGFGSGVR). The segment covering 35–51 (GRGRGRGRGRGRGRGAR) has biased composition (basic residues). Glycyl lysine isopeptide (Lys-Gly) (interchain with G-Cter in ubiquitin) cross-links involve residues Lys54 and Lys58. Residues 102-165 (LKDEVLKIMP…ILAKLSIVPV (64 aa)) enclose the S5 DRBM domain. A Phosphothreonine modification is found at Thr252. Lys263 carries the post-translational modification N6-acetyllysine. Ser264 is subject to Phosphoserine. Thr270 carries the post-translational modification Phosphothreonine. The residue at position 275 (Lys275) is an N6-acetyllysine; alternate. Lys275 participates in a covalent cross-link: Glycyl lysine isopeptide (Lys-Gly) (interchain with G-Cter in SUMO1); alternate. Lys275 is covalently cross-linked (Glycyl lysine isopeptide (Lys-Gly) (interchain with G-Cter in SUMO2); alternate). Lys275 participates in a covalent cross-link: Glycyl lysine isopeptide (Lys-Gly) (interchain with G-Cter in ubiquitin); alternate. Residue Ser281 is modified to Phosphoserine.

Belongs to the universal ribosomal protein uS5 family. As to quaternary structure, component of the small ribosomal subunit. Interacts with zinc finger protein ZNF277 (via zinc-finger domains); the interaction is direct; the interaction is extra-ribosomal. Interaction with ZNF277 competes with the binding of RPS2 to protein arginine methyltransferase PRMT3. Citrullinated by PADI4 in the Arg/Gly-rich region. Post-translationally, asymmetric arginine dimethylation by PRMT3 occurs at multiple sites in the Arg/Gly-rich region. In terms of processing, monoubiquitinated at Lys-54 and Lys-58 by RNF10 when a ribosome has stalled during translation, leading to its degradation by the proteasome. Deubiquitinated at Lys-54 and Lys-58 by USP10, preventing degradation by the proteasome and promoting 40S ribosome subunit recycling following ribosome dissociation.

Its subcellular location is the cytoplasm. It is found in the nucleus. It localises to the nucleolus. In terms of biological role, component of the ribosome, a large ribonucleoprotein complex responsible for the synthesis of proteins in the cell. The small ribosomal subunit (SSU) binds messenger RNAs (mRNAs) and translates the encoded message by selecting cognate aminoacyl-transfer RNA (tRNA) molecules. The large subunit (LSU) contains the ribosomal catalytic site termed the peptidyl transferase center (PTC), which catalyzes the formation of peptide bonds, thereby polymerizing the amino acids delivered by tRNAs into a polypeptide chain. The nascent polypeptides leave the ribosome through a tunnel in the LSU and interact with protein factors that function in enzymatic processing, targeting, and the membrane insertion of nascent chains at the exit of the ribosomal tunnel. Plays a role in the assembly and function of the 40S ribosomal subunit. Mutations in this protein affects the control of translational fidelity. Involved in nucleolar processing of pre-18S ribosomal RNA and ribosome assembly. This chain is Small ribosomal subunit protein uS5 (RPS2), found in Bos taurus (Bovine).